The sequence spans 400 residues: Tryptophan synthase beta chain (400 aa).

Lysine 90 carries the N6-(pyridoxal phosphate)lysine modification.

This sequence belongs to the TrpB family. In terms of assembly, tetramer of two alpha and two beta chains. The cofactor is pyridoxal 5'-phosphate.

The catalysed reaction is (1S,2R)-1-C-(indol-3-yl)glycerol 3-phosphate + L-serine = D-glyceraldehyde 3-phosphate + L-tryptophan + H2O. It participates in amino-acid biosynthesis; L-tryptophan biosynthesis; L-tryptophan from chorismate: step 5/5. The beta subunit is responsible for the synthesis of L-tryptophan from indole and L-serine. The chain is Tryptophan synthase beta chain from Alkaliphilus metalliredigens (strain QYMF).